Here is a 41-residue protein sequence, read N- to C-terminus: Large ribosomal subunit protein bL36 (41 aa).

This sequence belongs to the bacterial ribosomal protein bL36 family.

The chain is Large ribosomal subunit protein bL36 from Phenylobacterium zucineum (strain HLK1).